A 146-amino-acid chain; its full sequence is 3-dehydroquinate dehydratase (146 aa).

The Proton acceptor role is filled by Tyr24. Asn73, His79, and Asp86 together coordinate substrate. His99 acts as the Proton donor in catalysis. Substrate is bound by residues 100 to 101 (LS) and Arg110.

The protein belongs to the type-II 3-dehydroquinase family. In terms of assembly, homododecamer.

It carries out the reaction 3-dehydroquinate = 3-dehydroshikimate + H2O. It participates in metabolic intermediate biosynthesis; chorismate biosynthesis; chorismate from D-erythrose 4-phosphate and phosphoenolpyruvate: step 3/7. Functionally, catalyzes a trans-dehydration via an enolate intermediate. This is 3-dehydroquinate dehydratase from Shewanella oneidensis (strain ATCC 700550 / JCM 31522 / CIP 106686 / LMG 19005 / NCIMB 14063 / MR-1).